We begin with the raw amino-acid sequence, 427 residues long: Caspase recruitment domain-containing protein 8 (427 aa).

The disordered stretch occupies residues 1-23 (MGIPTSSVSEEQESSEGQDSGDI). The interval 51 to 186 (FLGPEGNVDV…FYAVLEKPSF (136 aa)) is ZU5. An FIIND domain is found at 51-336 (FLGPEGNVDV…IQLGAASAPP (286 aa)). Residues 187-336 (SLMGILLRIA…IQLGAASAPP (150 aa)) are UPA. Positions 336–426 (PAFSGAAFVK…YLVSYLRQQS (91 aa)) constitute a CARD domain.

In terms of assembly, interacts with DPP9; leading to inhibit activation of the inflammasome. DPP9 acts via formation of a ternary complex, composed of a DPP9 homodimer, one full-length CARD8 protein, and one cleaved C-terminus of CARD8 (Caspase recruitment domain-containing protein 8, C-terminus). Interacts with DPP8; leading to inhibit activation of the inflammasome, probably via formation of a ternary complex with DPP8. Interacts with NLRP3. Interacts with IKBKG/NEMO. Interacts with DRAL. Binds to caspase-1 (CASP1), CARD16/pseudo-ICE and CARD18/ICEBERG. Interacts with NLRP2 (via NACHT domain). Interacts with the C-terminal part of CARD8 (Caspase recruitment domain-containing protein 8, C-terminus) in absence of pathogens and other damage-associated signals. As to quaternary structure, interacts with the N-terminal part of CARD8 (Caspase recruitment domain-containing protein 8, N-terminus) in absence of pathogens and other damage-associated signals. Homomultimer; forms the CARD8 inflammasome polymeric complex, a filament composed of homopolymers of this form in response to pathogens and other damage-associated signals. The CARD8 inflammasome polymeric complex directly recruits pro-caspase-1 (proCASP1) independently of PYCARD/ASC. Interacts (via CARD domain) with CASP1 (via CARD domain); leading to CASP1 activation. Post-translationally, undergoes autocatalytic processing within the FIIND domain to generate the N-terminal and C-terminal parts, which are associated non-covalently in absence of pathogens and other damage-associated signals. Ubiquitinated by the N-end rule pathway in response to pathogens and other damage-associated signals, leading to its degradation by the proteasome and subsequent release of the cleaved C-terminal part of the protein (Caspase recruitment domain-containing protein 8, C-terminus), which polymerizes and forms the CARD8 inflammasome.

The protein resides in the cytoplasm. Its subcellular location is the nucleus. The protein localises to the inflammasome. Its activity is regulated as follows. CARD8 inflammasome is inhibited by DPP8 and DPP9, which sequester the C-terminal fragment of CARD8 (Caspase recruitment domain-containing protein 8, C-terminus) in a ternary complex, thereby preventing CARD8 oligomerization and activation. CARD8 inflammasome is activated by Val-boroPro (Talabostat, PT-100), an inhibitor of dipeptidyl peptidases DPP8 and DPP9. Val-boroPro relieves inhibition of DPP8 and/or DPP9 by inducing the proteasome-mediated destruction of the N-terminal part of CARD8, releasing its C-terminal part from autoinhibition. Its function is as follows. Inflammasome sensor, which mediates inflammasome activation in response to various pathogen-associated signals, leading to subsequent pyroptosis of CD4(+) T-cells and macrophages. Inflammasomes are supramolecular complexes that assemble in the cytosol in response to pathogens and other damage-associated signals and play critical roles in innate immunity and inflammation. Acts as a recognition receptor (PRR): recognizes specific pathogens and other damage-associated signals, such as Val-boroPro inhibitor, and mediates CARD8 inflammasome activation. In response to pathogen-associated signals, the N-terminal part of CARD8 is degraded by the proteasome, releasing the cleaved C-terminal part of the protein (Caspase recruitment domain-containing protein 8, C-terminus), which polymerizes to initiate the formation of the inflammasome complex: the CARD8 inflammasome directly recruits pro-caspase-1 (proCASP1) independently of PYCARD/ASC and promotes caspase-1 (CASP1) activation, which subsequently cleaves and activates inflammatory cytokines IL1B and IL18 and gasdermin-D (GSDMD), leading to pyroptosis. Also acts as a negative regulator of the NLRP3 inflammasome. May also act as an inhibitor of NF-kappa-B activation. Functionally, constitutes the precursor of the CARD8 inflammasome, which mediates autoproteolytic processing within the FIIND domain to generate the N-terminal and C-terminal parts, which are associated non-covalently in absence of pathogens and other damage-associated signals. In terms of biological role, regulatory part that prevents formation of the CARD8 inflammasome: in absence of pathogens and other damage-associated signals, interacts with the C-terminal part of CARD8 (Caspase recruitment domain-containing protein 8, C-terminus), preventing activation of the CARD8 inflammasome. In response to pathogen-associated signals, this part is ubiquitinated by the N-end rule pathway and degraded by the proteasome, releasing the cleaved C-terminal part of the protein, which polymerizes and forms the CARD8 inflammasome. Constitutes the active part of the CARD8 inflammasome. In absence of pathogens and other damage-associated signals, interacts with the N-terminal part of CARD8 (Caspase recruitment domain-containing protein 8, N-terminus), preventing activation of the CARD8 inflammasome. In response to pathogen-associated signals, the N-terminal part of CARD8 is degraded by the proteasome, releasing this form, which polymerizes to form the CARD8 inflammasome complex: the CARD8 inflammasome complex then directly recruits pro-caspase-1 (proCASP1) and promotes caspase-1 (CASP1) activation, leading to gasdermin-D (GSDMD) cleavage and subsequent pyroptosis. This chain is Caspase recruitment domain-containing protein 8, found in Pongo abelii (Sumatran orangutan).